The following is a 319-amino-acid chain: MSLNFLEFEKPIAELEAKIEALRDVSRHGGDSAVDLDKEIEQLEKKSLELKKKTFSNLGAWETAQLARHPLRPYTLDYIKHAFDEFDELAGDRAFADDKAIVGGIARLEGRPVMIIGHQKGRETKEKVKRNFGMPKPEGYRKALRLMEMAERFNMPIITFIDTAGAYPGVGAEERGQSEAIATNLKVMSGLKVPVICNVVGEGGSGGALAIGVGDYVNMLQYSTYSVISPEGCASILWRDSDKAPQAADAMGLTAPRLKELELIDEIIEEPLGGAHRDHAQMAANMKANLLRQLEDLEQLDHETLLERRYQRLMNYGYC.

In terms of domain architecture, CoA carboxyltransferase C-terminal spans 35–296 (DLDKEIEQLE…KANLLRQLED (262 aa)).

Belongs to the AccA family. In terms of assembly, acetyl-CoA carboxylase is a heterohexamer composed of biotin carboxyl carrier protein (AccB), biotin carboxylase (AccC) and two subunits each of ACCase subunit alpha (AccA) and ACCase subunit beta (AccD).

It is found in the cytoplasm. It catalyses the reaction N(6)-carboxybiotinyl-L-lysyl-[protein] + acetyl-CoA = N(6)-biotinyl-L-lysyl-[protein] + malonyl-CoA. Its pathway is lipid metabolism; malonyl-CoA biosynthesis; malonyl-CoA from acetyl-CoA: step 1/1. Functionally, component of the acetyl coenzyme A carboxylase (ACC) complex. First, biotin carboxylase catalyzes the carboxylation of biotin on its carrier protein (BCCP) and then the CO(2) group is transferred by the carboxyltransferase to acetyl-CoA to form malonyl-CoA. The sequence is that of Acetyl-coenzyme A carboxylase carboxyl transferase subunit alpha from Vibrio campbellii (strain ATCC BAA-1116).